Consider the following 164-residue polypeptide: Lipoprotein signal peptidase (164 aa).

2 helical membrane-spanning segments follow: residues 68–88 and 96–116; these read TILVVLAGAAVIFIAAMLWNA and FWGLSLILGGAAGNVFDRAMF. Active-site residues include Asp-121 and Asp-139. Residues 134–154 form a helical membrane-spanning segment; sequence TFNVADSAIVVGSCLLLIDLL.

Belongs to the peptidase A8 family.

It is found in the cell inner membrane. It catalyses the reaction Release of signal peptides from bacterial membrane prolipoproteins. Hydrolyzes -Xaa-Yaa-Zaa-|-(S,diacylglyceryl)Cys-, in which Xaa is hydrophobic (preferably Leu), and Yaa (Ala or Ser) and Zaa (Gly or Ala) have small, neutral side chains.. The protein operates within protein modification; lipoprotein biosynthesis (signal peptide cleavage). This protein specifically catalyzes the removal of signal peptides from prolipoproteins. The chain is Lipoprotein signal peptidase from Solibacter usitatus (strain Ellin6076).